A 103-amino-acid chain; its full sequence is Small ribosomal subunit protein uS10 (103 aa).

The protein belongs to the universal ribosomal protein uS10 family. As to quaternary structure, part of the 30S ribosomal subunit.

In terms of biological role, involved in the binding of tRNA to the ribosomes. The sequence is that of Small ribosomal subunit protein uS10 from Neisseria gonorrhoeae (strain ATCC 700825 / FA 1090).